The chain runs to 1270 residues: Myosin-1 (1270 aa).

The tract at residues 1–40 is disordered; it reads MGHSRRPAGGEKKSRGFGRSKAAADVGDGRQAGKPQVKKA. The Myosin motor domain maps to 50 to 729; it reads IGVSDLTLLS…TLFALETMRD (680 aa). Residue 143–150 participates in ATP binding; sequence GESGAGKT. The residue at position 371 (Ser371) is a Phosphoserine. Residues 418-500 are actin-binding; the sequence is SIGILDIYGF…PGVFAALNDA (83 aa). IQ domains lie at 733–753 and 754–779; these read HNMA…RIEC and AIRI…QGHQ. The 194-residue stretch at 787-980 folds into the TH1 domain; the sequence is RRRMSLLGSR…TIHTSAGEPP (194 aa). Disordered regions lie at residues 960–1102 and 1144–1270; these read GASN…VLYD and PEAY…DDEW. The span at 963–974 shows a compositional bias: polar residues; that stretch reads NVDSYKSSTIHT. Residues 1023-1058 show a composition bias toward pro residues; it reads ARQPMPQPTPQPAAVQPPPAPRPAVSPAAQPRPVPQ. A compositionally biased stretch (low complexity) spans 1059–1078; it reads PVAAVAAAQHTRNASSSSTR. Pro residues predominate over residues 1079–1088; the sequence is APPPPPPATP. The region spanning 1092–1153 is the SH3 domain; sequence QRKPMAKVLY…PEAYLEEQVA (62 aa). Over residues 1157 to 1167 the composition is skewed to pro residues; sequence KPAPPPPPPAA. Low complexity-rich tracts occupy residues 1168 to 1186 and 1238 to 1252; these read PRAS…VAAK and NSAS…LAEA.

Belongs to the TRAFAC class myosin-kinesin ATPase superfamily. Myosin family. Post-translationally, phosphorylation of the TEDS site (Ser-371) is required for the polarization of the actin cytoskeleton. Phosphorylation probably activates the myosin-I ATPase activity.

The protein localises to the cytoplasm. Its subcellular location is the cytoskeleton. It is found in the actin patch. In terms of biological role, type-I myosin implicated in the organization of the actin cytoskeleton. Required for proper actin cytoskeleton polarization. At the cell cortex, assembles in patch-like structures together with proteins from the actin-polymerizing machinery and promotes actin assembly. Functions as actin nucleation-promoting factor (NPF) for the Arp2/3 complex. Plays an important role in polarized growth, spore germination, hyphal morphogenesis, and septal wall formation. The polypeptide is Myosin-1 (myoA) (Aspergillus niger (strain ATCC MYA-4892 / CBS 513.88 / FGSC A1513)).